Here is an 84-residue protein sequence, read N- to C-terminus: M-zodatoxin-Lt2a (84 aa).

The first 22 residues, 1 to 22 (MKYFVIALALAVALVCIAESTA), serve as a signal peptide directing secretion. Positions 23-58 (YEVNEELENELDDLDDAAWLAVAEELQGLEDFEESR) are excised as a propeptide. A Processing quadruplet motif motif is present at residues 55–58 (EESR).

In terms of processing, cleavage of the propeptide depends on the processing quadruplet motif (XXXR, with at least one of X being E). In terms of tissue distribution, expressed by the venom gland.

Its subcellular location is the secreted. In terms of biological role, it has antimicrobial activity against Gram-positive bacteria (A.globiformis VKM Ac-1112 (MIC=0.7 uM), and B.subtilis VKM B-501 (MIC=0.4 uM)), Gram-negative bacteria (E.coli DH5-alpha (MIC=1.0 uM), E.coli MH1 (MIC=0.7 uM), and P.aeruginosa PAO1 (MIC=6.7 uM)), and yeasts (P.pastoris GS115 (MIC=6.7 uM), and S.cerevisiae Y190 (MIC=54 uM)). Also has a strong hemolytic activity against rabbit erythrocytes. Causes paralysis, but is not lethal when injected into insect (M.domestica) larvae. This Lachesana tarabaevi (Spider) protein is M-zodatoxin-Lt2a.